The primary structure comprises 305 residues: Sulfate adenylyltransferase subunit 2 (305 aa).

This sequence belongs to the PAPS reductase family. CysD subfamily. As to quaternary structure, heterodimer composed of CysD, the smaller subunit, and CysN.

It carries out the reaction sulfate + ATP + H(+) = adenosine 5'-phosphosulfate + diphosphate. The protein operates within sulfur metabolism; hydrogen sulfide biosynthesis; sulfite from sulfate: step 1/3. With CysN forms the ATP sulfurylase (ATPS) that catalyzes the adenylation of sulfate producing adenosine 5'-phosphosulfate (APS) and diphosphate, the first enzymatic step in sulfur assimilation pathway. APS synthesis involves the formation of a high-energy phosphoric-sulfuric acid anhydride bond driven by GTP hydrolysis by CysN coupled to ATP hydrolysis by CysD. The chain is Sulfate adenylyltransferase subunit 2 from Pseudomonas aeruginosa (strain LESB58).